The following is a 386-amino-acid chain: S-adenosylmethionine synthase (386 aa).

Histidine 17 lines the ATP pocket. Aspartate 19 is a Mg(2+) binding site. Glutamate 45 is a binding site for K(+). Glutamate 58 and glutamine 101 together coordinate L-methionine. A flexible loop region spans residues 101 to 111 (QSPDISQGVTE). ATP-binding positions include 168–170 (DAK), aspartate 242, 248–249 (RK), alanine 265, and lysine 269. Aspartate 242 lines the L-methionine pocket. Lysine 273 lines the L-methionine pocket.

It belongs to the AdoMet synthase family. Homotetramer; dimer of dimers. It depends on Mg(2+) as a cofactor. K(+) serves as cofactor.

It localises to the cytoplasm. The catalysed reaction is L-methionine + ATP + H2O = S-adenosyl-L-methionine + phosphate + diphosphate. It participates in amino-acid biosynthesis; S-adenosyl-L-methionine biosynthesis; S-adenosyl-L-methionine from L-methionine: step 1/1. Catalyzes the formation of S-adenosylmethionine (AdoMet) from methionine and ATP. The overall synthetic reaction is composed of two sequential steps, AdoMet formation and the subsequent tripolyphosphate hydrolysis which occurs prior to release of AdoMet from the enzyme. The protein is S-adenosylmethionine synthase of Leptospira borgpetersenii serovar Hardjo-bovis (strain JB197).